The primary structure comprises 258 residues: Imidazole glycerol phosphate synthase subunit HisF (258 aa).

Residues aspartate 11 and aspartate 130 contribute to the active site.

This sequence belongs to the HisA/HisF family. In terms of assembly, heterodimer of HisH and HisF.

It localises to the cytoplasm. It catalyses the reaction 5-[(5-phospho-1-deoxy-D-ribulos-1-ylimino)methylamino]-1-(5-phospho-beta-D-ribosyl)imidazole-4-carboxamide + L-glutamine = D-erythro-1-(imidazol-4-yl)glycerol 3-phosphate + 5-amino-1-(5-phospho-beta-D-ribosyl)imidazole-4-carboxamide + L-glutamate + H(+). It functions in the pathway amino-acid biosynthesis; L-histidine biosynthesis; L-histidine from 5-phospho-alpha-D-ribose 1-diphosphate: step 5/9. In terms of biological role, IGPS catalyzes the conversion of PRFAR and glutamine to IGP, AICAR and glutamate. The HisF subunit catalyzes the cyclization activity that produces IGP and AICAR from PRFAR using the ammonia provided by the HisH subunit. This chain is Imidazole glycerol phosphate synthase subunit HisF, found in Escherichia coli O127:H6 (strain E2348/69 / EPEC).